Consider the following 312-residue polypeptide: Olfactory receptor 6C70 (312 aa).

Over 1-22 the chain is Extracellular; the sequence is MKNHTRQIEFILLGLTDNSQLQ. N3 carries an N-linked (GlcNAc...) asparagine glycan. A helical transmembrane segment spans residues 23-43; it reads IVIFLFLLLNCVLSMIGNFTI. Residues 44–63 lie on the Cytoplasmic side of the membrane; that stretch reads IALILLDSQLKTPMYFFLRN. A helical transmembrane segment spans residues 64–84; it reads FSFLEISFTTACIPRFLITIV. Over 85 to 95 the chain is Extracellular; sequence TREKTISCNGC. A disulfide bridge links C95 with C177. A helical membrane pass occupies residues 96 to 116; it reads ISQLFFYIFLGVTEFFLLAAL. Over 117–141 the chain is Cytoplasmic; that stretch reads SYDRYVAICKPLRYMSIMSNKVCYQ. A helical membrane pass occupies residues 142-162; it reads LVFSSWVTGFLIIFTPLILGL. The Extracellular portion of the chain corresponds to 163-194; that stretch reads NLDFCASNIIDHFICDISLILQLSCSDTHLLE. A helical membrane pass occupies residues 195 to 215; that stretch reads LIAFLLAVMTLIVTLFLVILS. The Cytoplasmic portion of the chain corresponds to 216 to 237; that stretch reads YSYIIKTILKFPSAQQKKKAFS. Residues 238–258 form a helical membrane-spanning segment; the sequence is TCSSHMIVVSITYGSCMFIYI. Over 259-272 the chain is Extracellular; that stretch reads KPSANERVALSKGV. The chain crosses the membrane as a helical span at residues 273–290; that stretch reads TVLNTSVAPLLNPFIYTL. The Cytoplasmic segment spans residues 291-312; that stretch reads RNQQVKQAFKAVFRKIFSASDK.

Belongs to the G-protein coupled receptor 1 family.

It is found in the cell membrane. Its function is as follows. Odorant receptor. The sequence is that of Olfactory receptor 6C70 (OR6C70) from Homo sapiens (Human).